The primary structure comprises 560 residues: Membrane protein insertase YidC (560 aa).

The helical transmembrane segment at 1–21 (MDIKRTILIAALAVVSYVMVL) threads the bilayer. Positions 42–66 (VAPGLPDGVPAGNNGASADVPSANA) are disordered. The next 5 membrane-spanning stretches (helical) occupy residues 341–361 (LELT…FWLL), 367–387 (LLGN…GLFF), 437–457 (LGGC…YWVL), 468–488 (WMLW…PIIM), and 515–535 (PIIF…YWVV).

Belongs to the OXA1/ALB3/YidC family. Type 1 subfamily. As to quaternary structure, interacts with the Sec translocase complex via SecD. Specifically interacts with transmembrane segments of nascent integral membrane proteins during membrane integration.

The protein localises to the cell inner membrane. Its function is as follows. Required for the insertion and/or proper folding and/or complex formation of integral membrane proteins into the membrane. Involved in integration of membrane proteins that insert both dependently and independently of the Sec translocase complex, as well as at least some lipoproteins. Aids folding of multispanning membrane proteins. The polypeptide is Membrane protein insertase YidC (Pseudomonas putida (strain GB-1)).